The sequence spans 112 residues: MLVLRSAALFVVAALFEIGGAWLVWQGVREQRGWLWAAGGVLALGAYGFVATFQPDAHFGRILAAYGGIFVTGSILWGVVADGYRPDRWDIAGALVCLAGMALIMWAPRNGG.

4 helical membrane passes run 8-28 (ALFVVAALFEIGGAWLVWQGV), 33-53 (GWLWAAGGVLALGAYGFVATF), 62-82 (ILAAYGGIFVTGSILWGVVAD), and 88-108 (RWDIAGALVCLAGMALIMWAP).

The protein belongs to the UPF0060 family.

The protein localises to the cell membrane. The sequence is that of UPF0060 membrane protein SCO3297 from Streptomyces coelicolor (strain ATCC BAA-471 / A3(2) / M145).